The following is a 300-amino-acid chain: Urease accessory protein UreD (300 aa).

Belongs to the UreD family. In terms of assembly, ureD, UreF and UreG form a complex that acts as a GTP-hydrolysis-dependent molecular chaperone, activating the urease apoprotein by helping to assemble the nickel containing metallocenter of UreC. The UreE protein probably delivers the nickel.

The protein localises to the cytoplasm. Its function is as follows. Required for maturation of urease via the functional incorporation of the urease nickel metallocenter. The protein is Urease accessory protein UreD of Prochlorococcus marinus (strain MIT 9312).